The chain runs to 154 residues: Interleukin-2 (154 aa).

Positions 1 to 20 are cleaved as a signal peptide; the sequence is MCKMQLLSCIALSLVLVANS. Threonine 23 carries O-linked (GalNAc...) threonine glycosylation. A disulfide bridge links cysteine 78 with cysteine 126.

The protein belongs to the IL-2 family.

The protein localises to the secreted. Its function is as follows. Cytokine produced by activated CD4-positive helper T-cells and to a lesser extend activated CD8-positive T-cells and natural killer (NK) cells that plays pivotal roles in the immune response and tolerance. Binds to a receptor complex composed of either the high-affinity trimeric IL-2R (IL2RA/CD25, IL2RB/CD122 and IL2RG/CD132) or the low-affinity dimeric IL-2R (IL2RB and IL2RG). Interaction with the receptor leads to oligomerization and conformation changes in the IL-2R subunits resulting in downstream signaling starting with phosphorylation of JAK1 and JAK3. In turn, JAK1 and JAK3 phosphorylate the receptor to form a docking site leading to the phosphorylation of several substrates including STAT5. This process leads to activation of several pathways including STAT, phosphoinositide-3-kinase/PI3K and mitogen-activated protein kinase/MAPK pathways. Functions as a T-cell growth factor and can increase NK-cell cytolytic activity as well. Promotes strong proliferation of activated B-cells and subsequently immunoglobulin production. Plays a pivotal role in regulating the adaptive immune system by controlling the survival and proliferation of regulatory T-cells, which are required for the maintenance of immune tolerance. Moreover, participates in the differentiation and homeostasis of effector T-cell subsets, including Th1, Th2, Th17 as well as memory CD8-positive T-cells. This Mirounga angustirostris (Northern elephant seal) protein is Interleukin-2 (IL2).